Consider the following 82-residue polypeptide: Small ribosomal subunit protein uS17 (82 aa).

This sequence belongs to the universal ribosomal protein uS17 family. Part of the 30S ribosomal subunit.

Functionally, one of the primary rRNA binding proteins, it binds specifically to the 5'-end of 16S ribosomal RNA. In Synechococcus elongatus (strain ATCC 33912 / PCC 7942 / FACHB-805) (Anacystis nidulans R2), this protein is Small ribosomal subunit protein uS17.